We begin with the raw amino-acid sequence, 216 residues long: Ras-related protein RABE1d (216 aa).

22-29 (GDSGVGKS) is a GTP binding site. Positions 44–52 (FITTIGIDF) match the Effector region motif. Residues 70-74 (DTAGQ), 128-131 (NKAD), and 159-160 (SA) each bind GTP. Residues 196–216 (TKQDTAASSSTAEKSACCSYV) are disordered. Residues 200–216 (TAASSSTAEKSACCSYV) show a composition bias toward low complexity. Residues C212 and C213 are each lipidated (S-geranylgeranyl cysteine).

This sequence belongs to the small GTPase superfamily. Rab family. Interacts with PI5K2.

The protein resides in the golgi apparatus membrane. It localises to the cell membrane. In terms of biological role, involved in membrane trafficking from the Golgi to the plasma membrane. The chain is Ras-related protein RABE1d (RABE1D) from Arabidopsis thaliana (Mouse-ear cress).